The primary structure comprises 164 residues: UPF0114 protein YqhA (164 aa).

A run of 3 helical transmembrane segments spans residues 10-32 (YASR…ALAL), 53-75 (LILV…MVMF), and 136-155 (LMWY…VMGY).

It belongs to the UPF0114 family.

It localises to the cell membrane. The protein is UPF0114 protein YqhA of Salmonella typhi.